A 412-amino-acid polypeptide reads, in one-letter code: Regulator of microtubule dynamics protein 2 (412 aa).

A helical membrane pass occupies residues 9 to 28 (LLLGIMAGTAGISLLVLWYH). S51 bears the Phosphoserine mark. Positions 72–110 (QLQILEKLNELLTNVEELKEEIKFLKETIPKLEECIQDE) form a coiled coil. Phosphoserine is present on S121. Residues 122-153 (PQHRARKKKTTTTTVQRPATSNSSEEAESEGG) are disordered. T141 bears the Phosphothreonine mark. A Phosphotyrosine modification is found at Y154. Phosphothreonine occurs at positions 156 and 159.

Belongs to the RMDN family. As to quaternary structure, interacts with microtubules.

The protein localises to the membrane. It is found in the cytoplasm. The protein resides in the cytoskeleton. It localises to the spindle. Its subcellular location is the spindle pole. The protein is Regulator of microtubule dynamics protein 2 (Rmdn2) of Rattus norvegicus (Rat).